The following is a 162-amino-acid chain: Glycine cleavage system H protein, mitochondrial (162 aa).

Residues 1-31 constitute a mitochondrion transit peptide; the sequence is MALRIWASSTANALRLSSATRPHFSPLSRCF. The 83-residue stretch at 53 to 135 folds into the Lipoyl-binding domain; sequence VATIGITDHA…YEDGWMIKVK (83 aa). An N6-lipoyllysine modification is found at lysine 94.

Belongs to the GcvH family. As to quaternary structure, the glycine cleavage system is composed of four proteins: P, T, L and H. (R)-lipoate serves as cofactor.

The protein localises to the mitochondrion. In terms of biological role, the glycine cleavage system catalyzes the degradation of glycine. The H protein shuttles the methylamine group of glycine from the P protein to the T protein. This Flaveria pringlei protein is Glycine cleavage system H protein, mitochondrial (GDCSH).